The chain runs to 509 residues: Probable DNA ligase (509 aa).

D218 contributes to the ATP binding site. The N6-AMP-lysine intermediate role is filled by K220. Residues R225, R240, E269, F302, R374, and K380 each coordinate ATP.

It belongs to the ATP-dependent DNA ligase family. Mg(2+) serves as cofactor.

The enzyme catalyses ATP + (deoxyribonucleotide)n-3'-hydroxyl + 5'-phospho-(deoxyribonucleotide)m = (deoxyribonucleotide)n+m + AMP + diphosphate.. In terms of biological role, DNA ligase that seals nicks in double-stranded DNA during DNA replication, DNA recombination and DNA repair. The protein is Probable DNA ligase of Nocardioides sp. (strain ATCC BAA-499 / JS614).